The primary structure comprises 153 residues: Ribonuclease H (153 aa).

One can recognise an RNase H type-1 domain in the interval 7–148; that stretch reads PADLVEMWTD…ADMLANQGVA (142 aa). Mg(2+)-binding residues include aspartate 16, glutamate 54, aspartate 76, and aspartate 140.

It belongs to the RNase H family. In terms of assembly, monomer. Mg(2+) is required as a cofactor.

The protein resides in the cytoplasm. The catalysed reaction is Endonucleolytic cleavage to 5'-phosphomonoester.. Functionally, endonuclease that specifically degrades the RNA of RNA-DNA hybrids. This chain is Ribonuclease H, found in Bordetella avium (strain 197N).